The primary structure comprises 220 residues: MYQRPQNDYLRVNKRKSNYDQLNADSNSVPQLAQTQPRVQVYIIDKNDFKSLVQQLTSPQPCDRLPQNIPKHQDIRPEPINWTSSIPPSAMAVQEDPDVSLYMAYLQSLLEESSGSNGDQFEEPFDKYHSHMMAQSQPQDPTQSMPQSNGFEPFPSSWFNGSTQEMHGASSLQSTRVDYEYPLPLTPNFTFSSMTQHEVFGSDLDSIGPDEDLEFSYEIN.

Positions 49–57 (FKSLVQQLT) match the VQ motif. Disordered regions lie at residues 61–80 (PCDRLPQNIPKHQDIRPEPI) and 131–171 (HMMA…GASS). 2 stretches are compositionally biased toward polar residues: residues 133-150 (MAQSQPQDPTQSMPQSNG) and 157-171 (SWFNGSTQEMHGASS).

Its subcellular location is the nucleus. In terms of biological role, may function as negative regulator of plant defense. In Arabidopsis thaliana (Mouse-ear cress), this protein is VQ motif-containing protein 5.